The following is a 240-amino-acid chain: Thymidylate kinase (240 aa).

Position 10 to 17 (10 to 17 (GINGVGKS)) interacts with ATP.

This sequence belongs to the thymidylate kinase family.

The catalysed reaction is dTMP + ATP = dTDP + ADP. It participates in pyrimidine metabolism; dTTP biosynthesis. Catalyzes the conversion of dTMP to dTDP. The protein is Thymidylate kinase (TMK) of African swine fever virus (strain Badajoz 1971 Vero-adapted) (Ba71V).